A 197-amino-acid polypeptide reads, in one-letter code: Holliday junction branch migration complex subunit RuvA (197 aa).

The domain I stretch occupies residues 1–63 (MYAYLKGIIT…EDAHLLYGFR (63 aa)). The domain II stretch occupies residues 64–142 (SEDEKKLFLS…VAGDDLPAKV (79 aa)). The flexible linker stretch occupies residues 143-147 (AVQAS). A domain III region spans residues 148 to 197 (AENQELEEAMEAMLALGYKATELKKIKKFFEGTTDTAENYIKSALKMLVK).

It belongs to the RuvA family. Homotetramer. Forms an RuvA(8)-RuvB(12)-Holliday junction (HJ) complex. HJ DNA is sandwiched between 2 RuvA tetramers; dsDNA enters through RuvA and exits via RuvB. An RuvB hexamer assembles on each DNA strand where it exits the tetramer. Each RuvB hexamer is contacted by two RuvA subunits (via domain III) on 2 adjacent RuvB subunits; this complex drives branch migration. In the full resolvosome a probable DNA-RuvA(4)-RuvB(12)-RuvC(2) complex forms which resolves the HJ.

Its subcellular location is the cytoplasm. In terms of biological role, the RuvA-RuvB-RuvC complex processes Holliday junction (HJ) DNA during genetic recombination and DNA repair, while the RuvA-RuvB complex plays an important role in the rescue of blocked DNA replication forks via replication fork reversal (RFR). RuvA specifically binds to HJ cruciform DNA, conferring on it an open structure. The RuvB hexamer acts as an ATP-dependent pump, pulling dsDNA into and through the RuvAB complex. HJ branch migration allows RuvC to scan DNA until it finds its consensus sequence, where it cleaves and resolves the cruciform DNA. The sequence is that of Holliday junction branch migration complex subunit RuvA from Streptococcus pneumoniae serotype 19F (strain G54).